Consider the following 302-residue polypeptide: MAFQGHQARKRFGQHWLKDQTVLDRIVAAADLQPSDRVLEVGPGRGALTERLLSSPAAAVQAVELDRDLVDGLRERFAGDPRFSLRQGDVLELPLQLEDGVAASKVVANIPYNITGPLLDRLVGRLDRPVEPPYQRLVLLVQKQVAERIRARPGHSSFSALSVRMQLLARCTTVCPVPPRCFQPPPKVQSEVIQIDPLPADKRLPSDIARRVESLLRQAFLARRKMLRNTLASLAPEPQLQALAAAAGFQLHQRPQELAPQVWVALARGLNQGIDAASADGHDHGDGSGQGESSPGGARDQI.

Positions 15, 17, 42, 64, 89, and 109 each coordinate S-adenosyl-L-methionine. The segment at 275–302 (DAASADGHDHGDGSGQGESSPGGARDQI) is disordered.

This sequence belongs to the class I-like SAM-binding methyltransferase superfamily. rRNA adenine N(6)-methyltransferase family. RsmA subfamily.

It is found in the cytoplasm. The catalysed reaction is adenosine(1518)/adenosine(1519) in 16S rRNA + 4 S-adenosyl-L-methionine = N(6)-dimethyladenosine(1518)/N(6)-dimethyladenosine(1519) in 16S rRNA + 4 S-adenosyl-L-homocysteine + 4 H(+). In terms of biological role, specifically dimethylates two adjacent adenosines (A1518 and A1519) in the loop of a conserved hairpin near the 3'-end of 16S rRNA in the 30S particle. May play a critical role in biogenesis of 30S subunits. In Parasynechococcus marenigrum (strain WH8102), this protein is Ribosomal RNA small subunit methyltransferase A.